A 583-amino-acid polypeptide reads, in one-letter code: Threonine--tRNA ligase (583 aa).

A catalytic region spans residues 185–478 (DHRKLGRELD…LVEHYGGAFP (294 aa)). 3 residues coordinate Zn(2+): Cys-278, His-329, and His-455.

The protein belongs to the class-II aminoacyl-tRNA synthetase family. In terms of assembly, homodimer. Zn(2+) serves as cofactor.

The protein localises to the cytoplasm. It carries out the reaction tRNA(Thr) + L-threonine + ATP = L-threonyl-tRNA(Thr) + AMP + diphosphate + H(+). Functionally, catalyzes the attachment of threonine to tRNA(Thr) in a two-step reaction: L-threonine is first activated by ATP to form Thr-AMP and then transferred to the acceptor end of tRNA(Thr). Also edits incorrectly charged L-seryl-tRNA(Thr). This Borrelia turicatae (strain 91E135) protein is Threonine--tRNA ligase.